Here is a 146-residue protein sequence, read N- to C-terminus: Large-conductance mechanosensitive channel (146 aa).

3 helical membrane passes run 21–41 (VGII…ADLI), 44–64 (IIGL…LGDG), and 83–103 (GSFI…FLLV).

It belongs to the MscL family. In terms of assembly, homopentamer.

The protein resides in the cell inner membrane. Its function is as follows. Channel that opens in response to stretch forces in the membrane lipid bilayer. May participate in the regulation of osmotic pressure changes within the cell. This chain is Large-conductance mechanosensitive channel, found in Cereibacter sphaeroides (strain ATCC 17023 / DSM 158 / JCM 6121 / CCUG 31486 / LMG 2827 / NBRC 12203 / NCIMB 8253 / ATH 2.4.1.) (Rhodobacter sphaeroides).